The following is a 368-amino-acid chain: Probable replication factor C subunit 5 (368 aa).

Residue 69–76 (GPPGTGKT) participates in ATP binding.

The protein belongs to the activator 1 small subunits family. Heteropentamer of various rfc subunits that forms a complex (RFC) with PCNA in the presence of ATP.

The protein resides in the nucleus. Functionally, the elongation of primed DNA templates by DNA polymerase delta and epsilon requires the action of the accessory proteins proliferating cell nuclear antigen (PCNA) and activator 1. This Caenorhabditis elegans protein is Probable replication factor C subunit 5.